Consider the following 196-residue polypeptide: MQAVKCVIVGDGAVGKTCLLISYTTNAFPNEYIPTVFDNYSATVMVDSKPINLGLWDTAGQEDYDRLRPLSYPQTDVFLICFSVVSPPSFDNVSSKWQPEVSHHCPKTPCLLVGTKLDMREDKEQLKRLEEKKITPITTEQGEAKCKDIGAVKYIECSALTQKNLRLVFDEAVRAVISPAGGAKKDKKNNRGCLLF.

Positions 13, 15, 16, 17, 18, 32, 35, 60, 116, 118, and 159 each coordinate GTP. Position 17 (Thr-17) interacts with Mg(2+). Short sequence motifs (switch) lie at residues 26 to 37 (NAFPNEYIPTVF) and 57 to 75 (DTAGQEDYDRLRPLSYPQT). Thr-35 serves as a coordination point for Mg(2+). Cys-193 is subject to Cysteine methyl ester. A lipid anchor (S-geranylgeranyl cysteine) is attached at Cys-193. A propeptide spans 194–196 (LLF) (removed in mature form).

The protein belongs to the small GTPase superfamily. Rho family. As to quaternary structure, interacts (GTP-bound form) with PAK2 (via CRIB domain). Requires Mg(2+) as cofactor.

Its subcellular location is the cell membrane. It localises to the cytoplasm. The protein resides in the cytoskeleton. The catalysed reaction is GTP + H2O = GDP + phosphate + H(+). With respect to regulation, regulated by guanine nucleotide exchange factors (GEFs) which promote the exchange of bound GDP for free GTP, GTPase activating proteins (GAPs) which increase the GTP hydrolysis activity, and GDP dissociation inhibitors which inhibit the dissociation of the nucleotide from the GTPase. Its function is as follows. Small GTPase which cycles between active GTP-bound and inactive GDP-bound states. Involved in cytoskeleton remodeling. Plays a role in phagocytosis of bacteria and host erythrocytes. Involved in capping of surface receptors. May be involved in cytokinesis. The sequence is that of Rho-related protein racA from Entamoeba histolytica (strain ATCC 30459 / HM-1:IMSS / ABRM).